The primary structure comprises 947 residues: DNA mismatch repair protein MutS (947 aa).

An ATP-binding site is contributed by 620–627; it reads GPNMSGKS.

This sequence belongs to the DNA mismatch repair MutS family.

This protein is involved in the repair of mismatches in DNA. It is possible that it carries out the mismatch recognition step. This protein has a weak ATPase activity. The chain is DNA mismatch repair protein MutS from Clostridioides difficile (strain 630) (Peptoclostridium difficile).